A 304-amino-acid chain; its full sequence is Aspartate carbamoyltransferase catalytic subunit (304 aa).

Carbamoyl phosphate is bound by residues Arg-54 and Thr-55. Lys-83 serves as a coordination point for L-aspartate. Positions 104, 132, and 135 each coordinate carbamoyl phosphate. Arg-165 and Arg-226 together coordinate L-aspartate. Positions 265 and 266 each coordinate carbamoyl phosphate.

The protein belongs to the aspartate/ornithine carbamoyltransferase superfamily. ATCase family. Heterooligomer of catalytic and regulatory chains.

It catalyses the reaction carbamoyl phosphate + L-aspartate = N-carbamoyl-L-aspartate + phosphate + H(+). It functions in the pathway pyrimidine metabolism; UMP biosynthesis via de novo pathway; (S)-dihydroorotate from bicarbonate: step 2/3. In terms of biological role, catalyzes the condensation of carbamoyl phosphate and aspartate to form carbamoyl aspartate and inorganic phosphate, the committed step in the de novo pyrimidine nucleotide biosynthesis pathway. In Pyrobaculum islandicum (strain DSM 4184 / JCM 9189 / GEO3), this protein is Aspartate carbamoyltransferase catalytic subunit.